Here is a 225-residue protein sequence, read N- to C-terminus: Large ribosomal subunit protein uL1 (225 aa).

This sequence belongs to the universal ribosomal protein uL1 family. Part of the 50S ribosomal subunit.

Its function is as follows. Binds directly to 23S rRNA. The L1 stalk is quite mobile in the ribosome, and is involved in E site tRNA release. Functionally, protein L1 is also a translational repressor protein, it controls the translation of the L11 operon by binding to its mRNA. The chain is Large ribosomal subunit protein uL1 from Rhodopirellula baltica (strain DSM 10527 / NCIMB 13988 / SH1).